Consider the following 233-residue polypeptide: Ribose-5-phosphate isomerase A (233 aa).

Substrate contacts are provided by residues 28–31, 83–86, and 96–99; these read SGST, DGAD, and KGGG. Glu-105 serves as the catalytic Proton acceptor. Lys-123 serves as a coordination point for substrate.

This sequence belongs to the ribose 5-phosphate isomerase family. Homodimer.

It catalyses the reaction aldehydo-D-ribose 5-phosphate = D-ribulose 5-phosphate. Its pathway is carbohydrate degradation; pentose phosphate pathway; D-ribose 5-phosphate from D-ribulose 5-phosphate (non-oxidative stage): step 1/1. Catalyzes the reversible conversion of ribose-5-phosphate to ribulose 5-phosphate. In Bartonella bacilliformis (strain ATCC 35685 / KC583 / Herrer 020/F12,63), this protein is Ribose-5-phosphate isomerase A.